The sequence spans 536 residues: Cytochrome P450 78A7 (536 aa).

The chain crosses the membrane as a helical span at residues 36 to 56 (LFLAVVFLSIVTWALAGGGGV). Cys-481 contacts heme.

Belongs to the cytochrome P450 family. It depends on heme as a cofactor.

Its subcellular location is the membrane. Functionally, functions probably in association with CYP78A5 in regulating relative growth of the shoot apical meristem and plant organs via a non-cell-autonomous signal. The protein is Cytochrome P450 78A7 (CYP78A7) of Arabidopsis thaliana (Mouse-ear cress).